We begin with the raw amino-acid sequence, 649 residues long: Sulfate transporter 1.1 (649 aa).

Positions Met1–Val20 are disordered. The Cytoplasmic segment spans residues Met1–Arg86. The helical transmembrane segment at Gly87 to Ala107 threads the bilayer. Residues Lys108–Asn111 are Extracellular-facing. A helical transmembrane segment spans residues Val112–Gly132. Residues Ser133 to Asp136 lie on the Cytoplasmic side of the membrane. A helical membrane pass occupies residues Ile137–Ile157. The Extracellular segment spans residues Asp158 to Arg168. The next 2 membrane-spanning stretches (helical) occupy residues Leu169–Leu189 and Gly190–Ile210. At Thr211 to Asn248 the chain is on the extracellular side. The chain crosses the membrane as a helical span at residues Trp249 to Gly269. The Cytoplasmic portion of the chain corresponds to Lys270–Leu275. The helical transmembrane segment at Phe276–Ile296 threads the bilayer. Residues Phe297 to Arg334 lie on the Extracellular side of the membrane. A helical membrane pass occupies residues Ile335 to Ala355. The Cytoplasmic portion of the chain corresponds to Ala356–Glu367. Residues Met368–Gly388 form a helical membrane-spanning segment. Residues Ser389–Ala404 lie on the Extracellular side of the membrane. A helical membrane pass occupies residues Val405–Phe425. At Lys426–Ala431 the chain is on the cytoplasmic side. A helical transmembrane segment spans residues Ile432 to Leu452. At Ile453 to Met465 the chain is on the extracellular side. The chain crosses the membrane as a helical span at residues Gly466–Ile486. At Ser487 to Thr649 the chain is on the cytoplasmic side. One can recognise an STAS domain in the interval Gln517 to Cys640.

This sequence belongs to the SLC26A/SulP transporter (TC 2.A.53) family. In terms of assembly, interacts with OASA1 through its STAS domain. As to expression, expressed in lateral root cap, root hairs, epidermal and cortical cells of roots.

The protein localises to the membrane. In terms of biological role, high-affinity H(+)/sulfate cotransporter that mediates the uptake of the environmental sulfate by plant roots under low-sulfur conditions. Plays a central role in the regulation of sulfate assimilation. This chain is Sulfate transporter 1.1 (SULTR1;1), found in Arabidopsis thaliana (Mouse-ear cress).